The chain runs to 88 residues: Putative membrane protein insertion efficiency factor (88 aa).

The protein belongs to the UPF0161 family.

It localises to the cell inner membrane. Could be involved in insertion of integral membrane proteins into the membrane. This is Putative membrane protein insertion efficiency factor from Rickettsia canadensis (strain McKiel).